The primary structure comprises 303 residues: Probable WRKY transcription factor 30 (303 aa).

A disordered region spans residues 65 to 92 (DQVSQGGGSPKSDDSDQEPLVIKSSKKS). The WRKY DNA-binding region spans 107–175 (GVDRTLDDGF…YRGIHSCSQA (69 aa)). Residues 266-278 (SGSASHSASNSPS) show a composition bias toward low complexity. The segment at 266–291 (SGSASHSASNSPSTVPLESPFESYDP) is disordered.

Belongs to the WRKY group III family. In terms of assembly, interacts with WRKY53, WRKY54 and WRKY70.

It is found in the nucleus. Transcription factor. Interacts specifically with the W box (5'-(T)TGAC[CT]-3'), a frequently occurring elicitor-responsive cis-acting element. The polypeptide is Probable WRKY transcription factor 30 (Arabidopsis thaliana (Mouse-ear cress)).